The primary structure comprises 680 residues: DNA ligase (680 aa).

NAD(+) is bound by residues 44-48 (DYIYD), 94-95 (SL), and E124. The active-site N6-AMP-lysine intermediate is K126. Positions 147, 181, 297, and 321 each coordinate NAD(+). The Zn(2+) site is built by C415, C418, C433, and C438. The 83-residue stretch at 598-680 (DENSFFYGKK…VDEQVKEDGK (83 aa)) folds into the BRCT domain.

It belongs to the NAD-dependent DNA ligase family. LigA subfamily. Requires Mg(2+) as cofactor. Mn(2+) serves as cofactor.

It catalyses the reaction NAD(+) + (deoxyribonucleotide)n-3'-hydroxyl + 5'-phospho-(deoxyribonucleotide)m = (deoxyribonucleotide)n+m + AMP + beta-nicotinamide D-nucleotide.. DNA ligase that catalyzes the formation of phosphodiester linkages between 5'-phosphoryl and 3'-hydroxyl groups in double-stranded DNA using NAD as a coenzyme and as the energy source for the reaction. It is essential for DNA replication and repair of damaged DNA. This is DNA ligase from Leuconostoc mesenteroides subsp. mesenteroides (strain ATCC 8293 / DSM 20343 / BCRC 11652 / CCM 1803 / JCM 6124 / NCDO 523 / NBRC 100496 / NCIMB 8023 / NCTC 12954 / NRRL B-1118 / 37Y).